The following is a 210-amino-acid chain: Mitochondrial cardiolipin hydrolase (210 aa).

Over 1-5 the chain is Mitochondrial intermembrane; it reads MLLWG. The chain crosses the membrane as a helical span at residues 6-24; sequence RWKLAAGLAGLALSLELFY. The Cytoplasmic segment spans residues 25 to 210; that stretch reads RYMRRRKPLR…YNFFPEKENK (186 aa). Residues 138 to 165 form the PLD phosphodiesterase domain; sequence SSGYMHHKFAVVDGTVVLTGSLNWTVQA. Catalysis depends on residues H143, K145, and D150.

The protein belongs to the phospholipase D family. MitoPLD/Zucchini subfamily. In terms of assembly, homodimer.

The protein localises to the mitochondrion outer membrane. The catalysed reaction is a cardiolipin + H2O = a 1,2-diacyl-sn-glycero-3-phospho-(1'-sn-glycerol) + a 1,2-diacyl-sn-glycero-3-phosphate + H(+). In terms of biological role, presents phospholipase and nuclease activities, depending on the different physiological conditions. Plays a key role in mitochondrial fusion and fission via its phospholipase activity. In its phospholipase role, it uses the mitochondrial lipid cardiolipin as substrate to generate phosphatidate (PA or 1,2-diacyl-sn-glycero-3-phosphate), a second messenger signaling lipid. Production of PA facilitates Mitofusin-mediated fusion, whereas the cleavage of PA by the Lipin family of phosphatases produces diacylgycerol (DAG) which promotes mitochondrial fission. Regulates mitochondrial shape through facilitating mitochondrial fusion. During spermatogenesis, plays a critical role in PIWI-interacting RNA (piRNA) biogenesis. piRNAs provide essential protection against the activity of mobile genetic elements. piRNA-mediated transposon silencing is thus critical for maintaining genome stability, in particular in germline cells when transposons are mobilized as a consequence of wide-spread genomic demethylation. Has been shown to be a backbone-non-specific, single strand-specific nuclease, cleaving either RNA or DNA substrates with similar affinity. Produces 5' phosphate and 3' hydroxyl termini, suggesting it could directly participate in the processing of primary piRNA transcripts. Has been proposed to act as a cardiolipin hydrolase to generate phosphatidic acid at mitochondrial surface. Although it cannot be excluded that it can act as a phospholipase in some circumstances, this activity could not be confirmed. The protein is Mitochondrial cardiolipin hydrolase (pld6) of Xenopus laevis (African clawed frog).